Consider the following 67-residue polypeptide: ATP synthase F(0) complex subunit 8 (67 aa).

Residues 8–24 (TWFTVILSMIISLFMLL) traverse the membrane as a helical segment. The residue at position 54 (Lys54) is an N6-acetyllysine; alternate. Lys54 is subject to N6-succinyllysine; alternate. Lys57 is subject to N6-acetyllysine.

Belongs to the ATPase protein 8 family. In terms of assembly, component of the ATP synthase complex composed at least of ATP5F1A/subunit alpha, ATP5F1B/subunit beta, ATP5MC1/subunit c (homooctomer), MT-ATP6/subunit a, MT-ATP8/subunit 8, ATP5ME/subunit e, ATP5MF/subunit f, ATP5MG/subunit g, ATP5MK/subunit k, ATP5MJ/subunit j, ATP5F1C/subunit gamma, ATP5F1D/subunit delta, ATP5F1E/subunit epsilon, ATP5PF/subunit F6, ATP5PB/subunit b, ATP5PD/subunit d, ATP5PO/subunit OSCP. ATP synthase complex consists of a soluble F(1) head domain (subunits alpha(3) and beta(3)) - the catalytic core - and a membrane F(0) domain - the membrane proton channel (subunits c, a, 8, e, f, g, k and j). These two domains are linked by a central stalk (subunits gamma, delta, and epsilon) rotating inside the F1 region and a stationary peripheral stalk (subunits F6, b, d, and OSCP). Interacts with PRICKLE3.

Its subcellular location is the mitochondrion membrane. In terms of biological role, subunit 8, of the mitochondrial membrane ATP synthase complex (F(1)F(0) ATP synthase or Complex V) that produces ATP from ADP in the presence of a proton gradient across the membrane which is generated by electron transport complexes of the respiratory chain. ATP synthase complex consist of a soluble F(1) head domain - the catalytic core - and a membrane F(1) domain - the membrane proton channel. These two domains are linked by a central stalk rotating inside the F(1) region and a stationary peripheral stalk. During catalysis, ATP synthesis in the catalytic domain of F(1) is coupled via a rotary mechanism of the central stalk subunits to proton translocation. In vivo, can only synthesize ATP although its ATP hydrolase activity can be activated artificially in vitro. Part of the complex F(0) domain. The polypeptide is ATP synthase F(0) complex subunit 8 (Cavia porcellus (Guinea pig)).